Reading from the N-terminus, the 292-residue chain is 4-hydroxy-tetrahydrodipicolinate synthase (292 aa).

A pyruvate-binding site is contributed by T45. Y133 functions as the Proton donor/acceptor in the catalytic mechanism. The active-site Schiff-base intermediate with substrate is the K161. Residue I203 coordinates pyruvate.

This sequence belongs to the DapA family. Homotetramer; dimer of dimers.

It is found in the cytoplasm. The enzyme catalyses L-aspartate 4-semialdehyde + pyruvate = (2S,4S)-4-hydroxy-2,3,4,5-tetrahydrodipicolinate + H2O + H(+). It functions in the pathway amino-acid biosynthesis; L-lysine biosynthesis via DAP pathway; (S)-tetrahydrodipicolinate from L-aspartate: step 3/4. Catalyzes the condensation of (S)-aspartate-beta-semialdehyde [(S)-ASA] and pyruvate to 4-hydroxy-tetrahydrodipicolinate (HTPA). In Erwinia tasmaniensis (strain DSM 17950 / CFBP 7177 / CIP 109463 / NCPPB 4357 / Et1/99), this protein is 4-hydroxy-tetrahydrodipicolinate synthase.